The chain runs to 354 residues: Protein angel (354 aa).

Residues 22–59 (VSSQAKGASGKRKQKAKEMESSHDRNRRWTSLGNQAEG) are disordered.

Belongs to the CCR4/nocturin family. As to expression, ubiquitously expressed in embryos.

This Drosophila melanogaster (Fruit fly) protein is Protein angel (angel).